The primary structure comprises 536 residues: Putative UDP-glucuronosyltransferase ugt-47 (536 aa).

The first 21 residues, 1-21 (MMLQTSTILQLLLFLVGSVSA), serve as a signal peptide directing secretion. N52 and N308 each carry an N-linked (GlcNAc...) asparagine glycan. Residues 497-517 (IIVPVLFVLLYCLIIPFFKLI) traverse the membrane as a helical segment.

Belongs to the UDP-glycosyltransferase family.

Its subcellular location is the membrane. The enzyme catalyses glucuronate acceptor + UDP-alpha-D-glucuronate = acceptor beta-D-glucuronoside + UDP + H(+). The sequence is that of Putative UDP-glucuronosyltransferase ugt-47 (ugt-47) from Caenorhabditis briggsae.